The sequence spans 344 residues: L-rhamnose-proton symporter (344 aa).

10 helical membrane passes run 4–24 (AITM…CFYA), 38–58 (WSVG…ALLL), 68–88 (FNLS…IGNI), 101–121 (MGIG…TPII), 131–151 (TEGG…VGIV), 175–195 (LLLA…MNAA), 214–234 (LPSY…FCFI), 259–279 (ILLS…YAWG), 290–310 (MSWM…GLVL), and 321–341 (VAVL…VGLG).

Belongs to the L-rhamnose transporter (TC 2.A.7.6) family.

It localises to the cell inner membrane. It catalyses the reaction L-rhamnopyranose(in) + H(+)(in) = L-rhamnopyranose(out) + H(+)(out). Functionally, uptake of L-rhamnose across the cytoplasmic membrane with the concomitant transport of protons into the cell (symport system). The polypeptide is L-rhamnose-proton symporter (Salmonella typhi).